The sequence spans 168 residues: Peptide deformylase 1 (168 aa).

Fe cation is bound by residues cysteine 91 and histidine 133. Glutamate 134 is a catalytic residue. Position 137 (histidine 137) interacts with Fe cation.

It belongs to the polypeptide deformylase family. The cofactor is Fe(2+).

The enzyme catalyses N-terminal N-formyl-L-methionyl-[peptide] + H2O = N-terminal L-methionyl-[peptide] + formate. Its function is as follows. Removes the formyl group from the N-terminal Met of newly synthesized proteins. Requires at least a dipeptide for an efficient rate of reaction. N-terminal L-methionine is a prerequisite for activity but the enzyme has broad specificity at other positions. In Vibrio vulnificus (strain YJ016), this protein is Peptide deformylase 1.